A 151-amino-acid chain; its full sequence is Chemokine-like factor (151 aa).

The MARVEL domain maps to 13–133; that stretch reads FCLSLKCFVK…DCALMCQKLR (121 aa). The next 4 helical transmembrane spans lie at 19-39, 45-65, 74-94, and 107-127; these read CFVK…FIVA, YIVI…LYMC, FFWP…MLIV, and IMVG…DCAL. Asn-142 is a glycosylation site (N-linked (GlcNAc...) asparagine).

Belongs to the chemokine-like factor family. In terms of tissue distribution, both isoforms have highest expression levels in testis with relatively lower expression level in liver, spleen, lung, brain and heart and barely detectable levels in skeletal muscle and kidney were barely detected. In most tissues, isoform CKLF2 has higher expression levels than isoform CKLF1.

The protein resides in the secreted. The protein localises to the membrane. Functionally, may play an important role in inflammation and regeneration of skeletal muscle. Essential for embryonic development. In terms of biological role, has chemotactic response in monocytes, neutrophils and lymphocytes. Binds CCR4. The protein is Chemokine-like factor (Cklf) of Rattus norvegicus (Rat).